Here is a 194-residue protein sequence, read N- to C-terminus: Oligoribonuclease (194 aa).

An Exonuclease domain is found at 11-174 (LIWIDLEMTG…SDVRDSINEL (164 aa)). Y132 is an active-site residue.

This sequence belongs to the oligoribonuclease family.

The protein localises to the cytoplasm. Its function is as follows. 3'-to-5' exoribonuclease specific for small oligoribonucleotides. The sequence is that of Oligoribonuclease from Xanthomonas oryzae pv. oryzae (strain MAFF 311018).